We begin with the raw amino-acid sequence, 1186 residues long: Cytotoxicity-associated immunodominant antigen (1186 aa).

The span at 630-649 (EKEVEKKLESKSGNKNKMEA) shows a compositional bias: basic and acidic residues. A disordered region spans residues 630 to 652 (EKEVEKKLESKSGNKNKMEAKAQ).

Functionally, may be necessary for the transcription, folding, export, or function of the cytotoxin. This chain is Cytotoxicity-associated immunodominant antigen (cagA), found in Helicobacter pylori (strain ATCC 700392 / 26695) (Campylobacter pylori).